Here is a 413-residue protein sequence, read N- to C-terminus: MQKRVVILLLDSFGIGASEDAKDFGDLGANTLGNIAKACFNNLADSNDRNGVLKLPNLEGLGLGLSALKAANELPLGFQLKPNLIGAYAYAKELSSAKDTISGHWEMMGAPVLFEWGYFKDKNDSFPKEILDEIMHKTKIKGYLGNCHASGTEIIKDLGEKHLETLYPIFYTSADSVFQIAAHEERFGLDHLYALCEEAFQILEPLKIARVIARPFIGTNRENFKRTANRKDYAIKPHKKLLFETFIEEKQGEVISIGKIADIYAHVGITQKFKAGSLMELCDVTLDQVKNAPNNSLIFTNFVHFDSDYGHRRDVSGYANALEYFDARLKEVLDNLRENDLLILCADHGCDPSFKGTDHTREYIPVLFYHKDLQPAFLGKSETFADIGQSIAYFLGLSPLDYGKNLLNFKGQP.

Mn(2+) is bound by residues Asp-11, Asp-306, His-311, Asp-347, His-348, and His-359.

The protein belongs to the phosphopentomutase family. The cofactor is Mn(2+).

Its subcellular location is the cytoplasm. It carries out the reaction 2-deoxy-alpha-D-ribose 1-phosphate = 2-deoxy-D-ribose 5-phosphate. The enzyme catalyses alpha-D-ribose 1-phosphate = D-ribose 5-phosphate. It functions in the pathway carbohydrate degradation; 2-deoxy-D-ribose 1-phosphate degradation; D-glyceraldehyde 3-phosphate and acetaldehyde from 2-deoxy-alpha-D-ribose 1-phosphate: step 1/2. Its function is as follows. Isomerase that catalyzes the conversion of deoxy-ribose 1-phosphate (dRib-1-P) and ribose 1-phosphate (Rib-1-P) to deoxy-ribose 5-phosphate (dRib-5-P) and ribose 5-phosphate (Rib-5-P), respectively. This is Phosphopentomutase from Helicobacter pylori (strain J99 / ATCC 700824) (Campylobacter pylori J99).